A 270-amino-acid polypeptide reads, in one-letter code: MEELEKTQKFQKKKKQQQEKQDQSSPINFEMSSRSSLHSLPQTTIESPPDSPTLSSIPDSHGSSPHTIIPTPSVAKTETPFRVTNGEEEKKVSESRRQLRPSFSSSSSTPRESKWASLIRKALLGFRVIAFVSCLVSFSVMVSDRDKGWAHDSFYNYKEFRFCLAANVIGFVYSGFMICDLVYLLSTSIRRSRHNLRHFLEFGLDQMLAYLLASASTSASIRVDDWQSNWGADKFPDLARASVALSYVSFVAFAFCSLASGYALCALRSI.

Residues 1–110 (MEELEKTQKF…PSFSSSSSTP (110 aa)) are disordered. Over 1–121 (MEELEKTQKF…ESKWASLIRK (121 aa)) the chain is Cytoplasmic. Residues 24-66 (SSPINFEMSSRSSLHSLPQTTIESPPDSPTLSSIPDSHGSSPH) show a composition bias toward polar residues. Residues 85–97 (NGEEEKKVSESRR) are compositionally biased toward basic and acidic residues. Positions 100-110 (RPSFSSSSSTP) are enriched in low complexity. A helical transmembrane segment spans residues 122–142 (ALLGFRVIAFVSCLVSFSVMV). The Extracellular portion of the chain corresponds to 143-161 (SDRDKGWAHDSFYNYKEFR). Residues 162 to 182 (FCLAANVIGFVYSGFMICDLV) form a helical membrane-spanning segment. Topologically, residues 183–198 (YLLSTSIRRSRHNLRH) are cytoplasmic. A helical membrane pass occupies residues 199-221 (FLEFGLDQMLAYLLASASTSASI). At 222 to 246 (RVDDWQSNWGADKFPDLARASVALS) the chain is on the extracellular side. A helical transmembrane segment spans residues 247–267 (YVSFVAFAFCSLASGYALCAL). Residues 268-270 (RSI) are Cytoplasmic-facing.

Belongs to the Casparian strip membrane proteins (CASP) family. As to quaternary structure, homodimer and heterodimers.

It is found in the cell membrane. The sequence is that of CASP-like protein 4A1 from Arabidopsis thaliana (Mouse-ear cress).